The primary structure comprises 103 residues: uncharacterized protein (103 aa).

An N-terminal signal peptide occupies residues 1–13 (MLLSSIVSFVADA). Asn67 carries N-linked (GlcNAc...) asparagine glycosylation. The tract at residues 73–103 (LSSDSNRNIIDNSNNNQHPSSSSTSTSWKKF) is disordered.

It localises to the secreted. This is an uncharacterized protein from Dictyostelium discoideum (Social amoeba).